The sequence spans 582 residues: Proline--tRNA ligase (582 aa).

The protein belongs to the class-II aminoacyl-tRNA synthetase family. ProS type 1 subfamily. Homodimer.

The protein localises to the cytoplasm. The catalysed reaction is tRNA(Pro) + L-proline + ATP = L-prolyl-tRNA(Pro) + AMP + diphosphate. Functionally, catalyzes the attachment of proline to tRNA(Pro) in a two-step reaction: proline is first activated by ATP to form Pro-AMP and then transferred to the acceptor end of tRNA(Pro). As ProRS can inadvertently accommodate and process non-cognate amino acids such as alanine and cysteine, to avoid such errors it has two additional distinct editing activities against alanine. One activity is designated as 'pretransfer' editing and involves the tRNA(Pro)-independent hydrolysis of activated Ala-AMP. The other activity is designated 'posttransfer' editing and involves deacylation of mischarged Ala-tRNA(Pro). The misacylated Cys-tRNA(Pro) is not edited by ProRS. The protein is Proline--tRNA ligase of Mycobacterium bovis (strain ATCC BAA-935 / AF2122/97).